The chain runs to 91 residues: Probable Fe(2+)-trafficking protein (91 aa).

Belongs to the Fe(2+)-trafficking protein family. As to quaternary structure, monomer.

In terms of biological role, could be a mediator in iron transactions between iron acquisition and iron-requiring processes, such as synthesis and/or repair of Fe-S clusters in biosynthetic enzymes. This chain is Probable Fe(2+)-trafficking protein, found in Citrobacter koseri (strain ATCC BAA-895 / CDC 4225-83 / SGSC4696).